A 383-amino-acid polypeptide reads, in one-letter code: Queuine tRNA-ribosyltransferase (383 aa).

The active-site Proton acceptor is the Asp89. Substrate-binding positions include 89–93, Asp143, Gln187, and Gly214; that span reads DSGGF. The interval 245 to 251 is RNA binding; it reads GVGDLID. Asp264 functions as the Nucleophile in the catalytic mechanism. An RNA binding; important for wobble base 34 recognition region spans residues 269-273; sequence TRNAR. Positions 302, 304, 307, and 333 each coordinate Zn(2+).

Belongs to the queuine tRNA-ribosyltransferase family. In terms of assembly, homodimer. Within each dimer, one monomer is responsible for RNA recognition and catalysis, while the other monomer binds to the replacement base PreQ1. Zn(2+) serves as cofactor.

It carries out the reaction 7-aminomethyl-7-carbaguanine + guanosine(34) in tRNA = 7-aminomethyl-7-carbaguanosine(34) in tRNA + guanine. It participates in tRNA modification; tRNA-queuosine biosynthesis. Functionally, catalyzes the base-exchange of a guanine (G) residue with the queuine precursor 7-aminomethyl-7-deazaguanine (PreQ1) at position 34 (anticodon wobble position) in tRNAs with GU(N) anticodons (tRNA-Asp, -Asn, -His and -Tyr). Catalysis occurs through a double-displacement mechanism. The nucleophile active site attacks the C1' of nucleotide 34 to detach the guanine base from the RNA, forming a covalent enzyme-RNA intermediate. The proton acceptor active site deprotonates the incoming PreQ1, allowing a nucleophilic attack on the C1' of the ribose to form the product. After dissociation, two additional enzymatic reactions on the tRNA convert PreQ1 to queuine (Q), resulting in the hypermodified nucleoside queuosine (7-(((4,5-cis-dihydroxy-2-cyclopenten-1-yl)amino)methyl)-7-deazaguanosine). This chain is Queuine tRNA-ribosyltransferase, found in Thermodesulfovibrio yellowstonii (strain ATCC 51303 / DSM 11347 / YP87).